The primary structure comprises 396 residues: Ribosomal RNA large subunit methyltransferase I (396 aa).

The region spanning Ser-2–Arg-81 is the PUA domain.

This sequence belongs to the methyltransferase superfamily. RlmI family.

Its subcellular location is the cytoplasm. The catalysed reaction is cytidine(1962) in 23S rRNA + S-adenosyl-L-methionine = 5-methylcytidine(1962) in 23S rRNA + S-adenosyl-L-homocysteine + H(+). In terms of biological role, specifically methylates the cytosine at position 1962 (m5C1962) of 23S rRNA. This chain is Ribosomal RNA large subunit methyltransferase I, found in Shigella flexneri serotype 5b (strain 8401).